A 276-amino-acid chain; its full sequence is Pantothenate synthetase (276 aa).

26 to 33 lines the ATP pocket; it reads MGFLHEGH. The active-site Proton donor is His33. Gln57 contacts (R)-pantoate. Gln57 contributes to the beta-alanine binding site. 142-145 contributes to the ATP binding site; sequence GLKD. Residue Gln148 coordinates (R)-pantoate. Residues Ile171 and 179–182 contribute to the ATP site; that span reads KSSR.

This sequence belongs to the pantothenate synthetase family. In terms of assembly, homodimer.

It localises to the cytoplasm. It carries out the reaction (R)-pantoate + beta-alanine + ATP = (R)-pantothenate + AMP + diphosphate + H(+). It functions in the pathway cofactor biosynthesis; (R)-pantothenate biosynthesis; (R)-pantothenate from (R)-pantoate and beta-alanine: step 1/1. Catalyzes the condensation of pantoate with beta-alanine in an ATP-dependent reaction via a pantoyl-adenylate intermediate. This chain is Pantothenate synthetase, found in Exiguobacterium sibiricum (strain DSM 17290 / CCUG 55495 / CIP 109462 / JCM 13490 / 255-15).